We begin with the raw amino-acid sequence, 449 residues long: UDP-N-acetylmuramate--L-alanine ligase (449 aa).

110–116 (GTHGKTT) is an ATP binding site.

It belongs to the MurCDEF family.

The protein resides in the cytoplasm. The enzyme catalyses UDP-N-acetyl-alpha-D-muramate + L-alanine + ATP = UDP-N-acetyl-alpha-D-muramoyl-L-alanine + ADP + phosphate + H(+). It participates in cell wall biogenesis; peptidoglycan biosynthesis. Functionally, cell wall formation. In Desulfitobacterium hafniense (strain Y51), this protein is UDP-N-acetylmuramate--L-alanine ligase.